Consider the following 565-residue polypeptide: Adenine deaminase 1 (565 aa).

Belongs to the metallo-dependent hydrolases superfamily. Adenine deaminase family. Mn(2+) serves as cofactor.

The catalysed reaction is adenine + H2O + H(+) = hypoxanthine + NH4(+). In Rhizobium etli (strain ATCC 51251 / DSM 11541 / JCM 21823 / NBRC 15573 / CFN 42), this protein is Adenine deaminase 1.